A 469-amino-acid polypeptide reads, in one-letter code: Adenosylhomocysteinase (469 aa).

Substrate contacts are provided by T60, D135, and E195. 196 to 198 (TTT) contacts NAD(+). Positions 225 and 229 each coordinate substrate. Residues N230, 259-264 (GYGDVG), E282, N317, 338-340 (IGH), and N383 each bind NAD(+).

Belongs to the adenosylhomocysteinase family. The cofactor is NAD(+).

It localises to the cytoplasm. It carries out the reaction S-adenosyl-L-homocysteine + H2O = L-homocysteine + adenosine. It functions in the pathway amino-acid biosynthesis; L-homocysteine biosynthesis; L-homocysteine from S-adenosyl-L-homocysteine: step 1/1. May play a key role in the regulation of the intracellular concentration of adenosylhomocysteine. In Hyphomonas neptunium (strain ATCC 15444), this protein is Adenosylhomocysteinase.